Reading from the N-terminus, the 290-residue chain is 4-hydroxybenzoate octaprenyltransferase (290 aa).

The next 6 helical transmembrane spans lie at W41–M61, W89–L109, F133–F153, D158–Y178, F202–I224, and W269–G289.

It belongs to the UbiA prenyltransferase family. Mg(2+) is required as a cofactor.

The protein resides in the cell inner membrane. It carries out the reaction all-trans-octaprenyl diphosphate + 4-hydroxybenzoate = 4-hydroxy-3-(all-trans-octaprenyl)benzoate + diphosphate. The protein operates within cofactor biosynthesis; ubiquinone biosynthesis. Catalyzes the prenylation of para-hydroxybenzoate (PHB) with an all-trans polyprenyl group. Mediates the second step in the final reaction sequence of ubiquinone-8 (UQ-8) biosynthesis, which is the condensation of the polyisoprenoid side chain with PHB, generating the first membrane-bound Q intermediate 3-octaprenyl-4-hydroxybenzoate. The chain is 4-hydroxybenzoate octaprenyltransferase from Burkholderia ambifaria (strain ATCC BAA-244 / DSM 16087 / CCUG 44356 / LMG 19182 / AMMD) (Burkholderia cepacia (strain AMMD)).